Here is a 238-residue protein sequence, read N- to C-terminus: tRNA (guanine-N(1)-)-methyltransferase (238 aa).

Residues Gly-110 and 129–134 (LGDFIL) each bind S-adenosyl-L-methionine.

This sequence belongs to the RNA methyltransferase TrmD family. As to quaternary structure, homodimer.

Its subcellular location is the cytoplasm. It carries out the reaction guanosine(37) in tRNA + S-adenosyl-L-methionine = N(1)-methylguanosine(37) in tRNA + S-adenosyl-L-homocysteine + H(+). In terms of biological role, specifically methylates guanosine-37 in various tRNAs. The polypeptide is tRNA (guanine-N(1)-)-methyltransferase (Clostridium botulinum (strain Alaska E43 / Type E3)).